The following is a 277-amino-acid chain: Ribonuclease HII (277 aa).

The RNase H type-2 domain maps to 20-250; that stretch reads KLIIGLDEAG…SKKLLKKIED (231 aa). A divalent metal cation is bound by residues D26, E27, and D141.

It belongs to the RNase HII family. Mn(2+) is required as a cofactor. Mg(2+) serves as cofactor.

It localises to the cytoplasm. It carries out the reaction Endonucleolytic cleavage to 5'-phosphomonoester.. In terms of biological role, endonuclease that specifically degrades the RNA of RNA-DNA hybrids. This Methanococcus aeolicus (strain ATCC BAA-1280 / DSM 17508 / OCM 812 / Nankai-3) protein is Ribonuclease HII.